Here is a 179-residue protein sequence, read N- to C-terminus: Shikimate kinase (179 aa).

15-20 (GAGKTS) is an ATP binding site. Thr-19 lines the Mg(2+) pocket. Residues Asp-37, Arg-61, and Gly-83 each contribute to the substrate site. Arg-122 contacts ATP. Arg-142 serves as a coordination point for substrate.

The protein belongs to the shikimate kinase family. Monomer. The cofactor is Mg(2+).

The protein resides in the cytoplasm. The catalysed reaction is shikimate + ATP = 3-phosphoshikimate + ADP + H(+). It participates in metabolic intermediate biosynthesis; chorismate biosynthesis; chorismate from D-erythrose 4-phosphate and phosphoenolpyruvate: step 5/7. In terms of biological role, catalyzes the specific phosphorylation of the 3-hydroxyl group of shikimic acid using ATP as a cosubstrate. In Coxiella burnetii (strain Dugway 5J108-111), this protein is Shikimate kinase.